Here is a 24-residue protein sequence, read N- to C-terminus: Flavin reductase (NADPH) (24 aa).

Residues G9, T11, G12, and T14 each coordinate NADP(+).

This sequence belongs to the BLVRB family. In terms of assembly, monomer. Detected in erythrocytes (at protein level).

It localises to the cytoplasm. The catalysed reaction is reduced riboflavin + NADP(+) = riboflavin + NADPH + 2 H(+). The enzyme catalyses bilirubin IXbeta + NADP(+) = biliverdin IXbeta + NADPH + H(+). It carries out the reaction FMNH2 + NAD(+) = FMN + NADH + 2 H(+). It catalyses the reaction FMNH2 + NADP(+) = FMN + NADPH + 2 H(+). The catalysed reaction is S-nitroso-CoA + L-cysteinyl-[protein] = S-nitroso-L-cysteinyl-[protein] + CoA. The enzyme catalyses L-cysteinyl-[SCAN] + S-nitroso-CoA = S-nitroso-L-cysteinyl-[SCAN] + CoA. It carries out the reaction S-nitroso-L-cysteinyl-[SCAN] + L-cysteinyl-[protein] = L-cysteinyl-[SCAN] + S-nitroso-L-cysteinyl-[protein]. Enzyme that can both act as a NAD(P)H-dependent reductase and a S-nitroso-CoA-dependent nitrosyltransferase. Promotes fetal heme degradation during development. Also expressed in adult tissues, where it acts as a regulator of hematopoiesis, intermediary metabolism (glutaminolysis, glycolysis, TCA cycle and pentose phosphate pathway) and insulin signaling. Has a broad specificity oxidoreductase activity by catalyzing the NAD(P)H-dependent reduction of a variety of flavins, such as riboflavin, FAD or FMN, biliverdins, methemoglobin and PQQ (pyrroloquinoline quinone). Contributes to fetal heme catabolism by catalyzing reduction of biliverdin IXbeta into bilirubin IXbeta in the liver. Biliverdin IXbeta, which constitutes the major heme catabolite in the fetus is not present in adult. Does not reduce bilirubin IXalpha. Can also reduce the complexed Fe(3+) iron to Fe(2+) in the presence of FMN and NADPH. Acts as a protein nitrosyltransferase by catalyzing nitrosylation of cysteine residues of target proteins, such as HMOX2, INSR and IRS1. S-nitroso-CoA-dependent nitrosyltransferase activity is mediated via a 'ping-pong' mechanism: BLVRB first associates with both S-nitroso-CoA and protein substrate, nitric oxide group is then transferred from S-nitroso-CoA to Cys residues of BLVRB and from S-nitroso-BLVRB to the protein substrate. Inhibits insulin signaling by mediating nitrosylation of INSR and IRS1, leading to their inhibition. The chain is Flavin reductase (NADPH) (BLVRB) from Aquarana catesbeiana (American bullfrog).